Reading from the N-terminus, the 268-residue chain is Chymotrypsin-C (268 aa).

Residues 1-16 (MLGITVLAAILACASS) form the signal peptide. Positions 17–29 (CGDPTFPPNLSAR) are cleaved as a propeptide — activation peptide. 5 disulfides stabilise this stretch: Cys17-Cys141, Cys59-Cys75, Cys155-Cys222, Cys186-Cys202, and Cys212-Cys243. Asn25 carries an N-linked (GlcNAc...) asparagine glycan. The Peptidase S1 domain occupies 30-267 (VVGGEDAVPN…YIDWIKEKIQ (238 aa)). The active-site Charge relay system is the His74. N-linked (GlcNAc...) asparagine glycans are attached at residues Asn79 and Asn90. Asp121 acts as the Charge relay system in catalysis. Asn182 carries N-linked (GlcNAc...) asparagine glycosylation. The active-site Charge relay system is Ser216.

It belongs to the peptidase S1 family. Elastase subfamily.

It carries out the reaction Preferential cleavage: Leu-|-Xaa, Tyr-|-Xaa, Phe-|-Xaa, Met-|-Xaa, Trp-|-Xaa, Gln-|-Xaa, Asn-|-Xaa.. In terms of biological role, regulates activation and degradation of trypsinogens and procarboxypeptidases by targeting specific cleavage sites within their zymogen precursors. Has chymotrypsin-type protease activity and hypocalcemic activity. Cleaves TRY4 and TRY5 and thereby inhibits their autoactivation. This is Chymotrypsin-C (Ctrc) from Mus musculus (Mouse).